The sequence spans 635 residues: Glutamine--fructose-6-phosphate aminotransferase [isomerizing] (635 aa).

Residue Cys2 is the Nucleophile; for GATase activity of the active site. The 217-residue stretch at 2–218 (CGIVGMVAGR…EGDIADVHRD (217 aa)) folds into the Glutamine amidotransferase type-2 domain. SIS domains are found at residues 299–439 (FERL…AKKI) and 472–625 (CARH…IDQP). The active-site For Fru-6P isomerization activity is the Lys630.

Homodimer.

It is found in the cytoplasm. It carries out the reaction D-fructose 6-phosphate + L-glutamine = D-glucosamine 6-phosphate + L-glutamate. In terms of biological role, catalyzes the first step in hexosamine metabolism, converting fructose-6P into glucosamine-6P using glutamine as a nitrogen source. This is Glutamine--fructose-6-phosphate aminotransferase [isomerizing] from Treponema pallidum (strain Nichols).